A 385-amino-acid polypeptide reads, in one-letter code: Phosphotransferase FrzJ (385 aa).

Asparagine 38 and lysine 59 together coordinate ATP. Residue aspartate 245 is part of the active site.

This sequence belongs to the methylthioribose kinase family. In terms of assembly, monomer.

It catalyses the reaction (1S,3S,6S,7S,8S,9S)-6-[(4-methoxyphenyl)methyl]-3-(methylamino)-5-azatricyclo[6.3.1.0(1,5)]dodecane-7,9-diol + ATP = (-)-FR901483 + ADP + 2 H(+). It participates in secondary metabolite biosynthesis. In terms of biological role, phosphotransferase; part of the gene cluster that mediates the biosynthesis of the alkaloid (-)-FR901483, a potent immunosuppressant that shows efficacy in animal models and a probable inhibitor of purine nucleotide biosynthesis by targeting phosphoribosylpyrophosphate amidotransferase (PPAT). FrzJ catalyzes the last step of the pathway by phosphorylating the C4'-OH of dephospho-(-)-FR901483 to produce (-)-FR901483. The biosynthesis of (-)-FR901483 starts with the condensation of two L-tyrosines to yield (S,S)-dityrosyl-piperazine. This process occurs in 3 steps with the non-canonical nonribosomal peptide synthetase FrzA catalyzing the reduction of L-tyrosine into L-tyrosinal, the spontaneous condensation of 2 L-tyrosinal units, and the subsequent reduction by the NmrA-like family domain-containing oxidoreductase FrzB. The cytochrome P450 monooxygenase FrzC then performs coupling between N10 and C1' to morph the piperazine into a 1,4-diazabicyclo[3.2.1]octane spiro-fused to a 2,5-cyclohexadienone. The dienone portion is further reduced to cyclohexanone by the flavin-dependent reductase FrzD. The methyltranserases (MTs) FrzE and FrzF are then involved in the methylation at the C10' amine and the C4 phenolic oxygen, respectively. The order of the two MTs appear to be interchangeable. Cleavage of the C9-N10' bond by the dioxygenase FrzG then leads to formation of a conjugated iminium. In addition to the oxidation of C9, an additional dehydrogenation between C7 and C8 can occur to give a likely shunt product. The next biosynthetic step is the intramolecular aldol condensation catalyzed by the newly identified aldolase FrzH to yield an aza-tricyclic product with the formation of a C9-C3' bond. The short-chain dehydrogenase/reductase FrzI then produces dephospho-(-)-FR901483 that is phosphorylated at C4'-OH into (-)-FR901483 by the phosphotransferase FrzJ. The polypeptide is Phosphotransferase FrzJ (Cladobotryum sp).